The following is a 118-amino-acid chain: uncharacterized protein (118 aa).

The protein to E.coli YeaO.

This is an uncharacterized protein from Mycobacterium bovis (strain ATCC BAA-935 / AF2122/97).